The primary structure comprises 657 residues: Hemocyanin (657 aa).

A glycan (N-linked (GlcNAc...) asparagine) is linked at asparagine 167. Histidine 194, histidine 198, histidine 224, histidine 344, histidine 348, and histidine 384 together coordinate Cu cation. Cystine bridges form between cysteine 483/cysteine 502 and cysteine 562/cysteine 609.

Belongs to the tyrosinase family. Hemocyanin subfamily. It consists of at least four very similar subunits. Hemolymph.

Its subcellular location is the secreted. It localises to the extracellular space. Functionally, hemocyanins are copper-containing oxygen carriers occurring freely dissolved in the hemolymph of many mollusks and arthropods. This is Hemocyanin from Palinurus vulgaris (European spiny lobster).